The following is a 383-amino-acid chain: MSSPERALLNLLTDIALSFDGAILGLTLAVSAVGSALKYASTNAALKKIKDAPEVSISDLRSLLPASEDKSETNDNRKSNDQRIVVVRGVVKPKISGDEGYKNNNVLISPETGDKALIIQRTQTYVYSGWKRLFQSTGHRFMLERSLRKHGADFTRTVPFVIVGKDQQSNSSFVAVNMDGSRQPLPLTTVYNRLQPINSSFLQAFLYPDYPVGLLDIEKILPPGKDITAVGIYSFNNGVPEIKSCQDLPYFLSEMTKDKMIEDLMEQTNFIFLGSVILGIVSVGILSYAAVRTWNKWKQWNHQRELPQRPNDSVVDDEPEDADEIPDGELCVICVSRRRVPAFIPCGHVVCCRRCASTVERELNPKCPVCLQSIRGSMRVYYS.

At Met-1–Asp-14 the chain is on the cytoplasmic side. The chain crosses the membrane as a helical span at residues Ile-15–Ser-35. Topologically, residues Ala-36–Asn-269 are chloroplast intermembrane. The chain crosses the membrane as a helical span at residues Phe-270–Ala-290. The Cytoplasmic portion of the chain corresponds to Val-291–Ser-383. An RING-type zinc finger spans residues Cys-331–Cys-370.

It localises to the plastid. Its subcellular location is the chloroplast outer membrane. It catalyses the reaction S-ubiquitinyl-[E2 ubiquitin-conjugating enzyme]-L-cysteine + [acceptor protein]-L-lysine = [E2 ubiquitin-conjugating enzyme]-L-cysteine + N(6)-ubiquitinyl-[acceptor protein]-L-lysine.. It participates in protein modification; protein ubiquitination. In terms of biological role, possesses E3 ubiquitin-protein ligase activity. This chain is E3 ubiquitin-protein ligase SPL2, found in Arabidopsis thaliana (Mouse-ear cress).